Reading from the N-terminus, the 148-residue chain is Ribonuclease H (148 aa).

The RNase H type-1 domain maps to 2–143 (TADIIYIYSD…ADVLANQGVL (142 aa)). The Mg(2+) site is built by Asp11, Glu49, Asp71, and Asp135.

It belongs to the RNase H family. As to quaternary structure, monomer. The cofactor is Mg(2+).

The protein localises to the cytoplasm. It catalyses the reaction Endonucleolytic cleavage to 5'-phosphomonoester.. Endonuclease that specifically degrades the RNA of RNA-DNA hybrids. This is Ribonuclease H from Thiobacillus denitrificans (strain ATCC 25259 / T1).